Reading from the N-terminus, the 218-residue chain is Elongation factor Ts (218 aa).

The segment at 82 to 85 is involved in Mg(2+) ion dislocation from EF-Tu; that stretch reads TDFV.

This sequence belongs to the EF-Ts family.

The protein resides in the cytoplasm. Functionally, associates with the EF-Tu.GDP complex and induces the exchange of GDP to GTP. It remains bound to the aminoacyl-tRNA.EF-Tu.GTP complex up to the GTP hydrolysis stage on the ribosome. The polypeptide is Elongation factor Ts (Prochlorococcus marinus (strain MIT 9215)).